A 1687-amino-acid polypeptide reads, in one-letter code: Zinc finger protein 142 (1687 aa).

Disordered regions lie at residues Met-1–Glu-23 and Thr-83–Gly-150. Residues Lys-125 to Asp-140 are compositionally biased toward basic and acidic residues. Position 154 is a phosphoserine (Ser-154). 3 C2H2-type zinc fingers span residues His-163–His-185, His-219–His-242, and Tyr-253–His-275. A C2H2-type 4; atypical zinc finger spans residues Leu-286–His-311. 10 C2H2-type zinc fingers span residues Val-316–His-340, Phe-343–His-366, Leu-372–His-395, His-401–His-423, His-429–His-451, Tyr-457–His-479, Tyr-485–His-507, Leu-512–His-536, Tyr-544–His-567, and Phe-573–His-596. Residue Lys-594 forms a Glycyl lysine isopeptide (Lys-Gly) (interchain with G-Cter in SUMO2) linkage. Disordered stretches follow at residues Glu-613–Glu-690, Leu-704–Pro-798, Lys-897–Leu-935, Arg-947–Glu-1014, and Gly-1052–Asp-1092. Residues Pro-725–Leu-739 are compositionally biased toward low complexity. Residues Thr-1061 to Asp-1075 are compositionally biased toward polar residues. Over residues Gly-1082–Asp-1092 the composition is skewed to low complexity. C2H2-type zinc fingers lie at residues Leu-1135–His-1158, Leu-1171–His-1194, His-1200–His-1222, Ile-1228–His-1251, His-1257–His-1280, Phe-1286–His-1309, Leu-1328–His-1351, Leu-1354–His-1377, His-1380–His-1403, Leu-1424–His-1446, Tyr-1452–His-1474, Tyr-1480–His-1502, Tyr-1508–His-1530, Tyr-1536–His-1559, and Phe-1565–His-1587. Residue Lys-1193 forms a Glycyl lysine isopeptide (Lys-Gly) (interchain with G-Cter in SUMO2) linkage. Lys-1242 participates in a covalent cross-link: Glycyl lysine isopeptide (Lys-Gly) (interchain with G-Cter in SUMO2). Residue Lys-1591 forms a Glycyl lysine isopeptide (Lys-Gly) (interchain with G-Cter in SUMO2) linkage. C2H2-type zinc fingers lie at residues Tyr-1593–His-1615 and Phe-1621–His-1643. A disordered region spans residues Lys-1638–Gly-1687.

Belongs to the krueppel C2H2-type zinc-finger protein family.

It is found in the nucleus. Functionally, may be involved in transcriptional regulation. This is Zinc finger protein 142 from Homo sapiens (Human).